The following is a 587-amino-acid chain: Aspartate--tRNA ligase (587 aa).

Residue Glu-173 participates in L-aspartate binding. Residues 197 to 200 (QTLK) are aspartate. An L-aspartate-binding site is contributed by Arg-219. ATP contacts are provided by residues 219 to 221 (RDE) and Gln-228. His-446 contacts L-aspartate. Glu-480 is an ATP binding site. Residue Arg-487 coordinates L-aspartate. 532-535 (GLDR) is an ATP binding site.

Belongs to the class-II aminoacyl-tRNA synthetase family. Type 1 subfamily. As to quaternary structure, homodimer.

Its subcellular location is the cytoplasm. It carries out the reaction tRNA(Asp) + L-aspartate + ATP = L-aspartyl-tRNA(Asp) + AMP + diphosphate. Functionally, catalyzes the attachment of L-aspartate to tRNA(Asp) in a two-step reaction: L-aspartate is first activated by ATP to form Asp-AMP and then transferred to the acceptor end of tRNA(Asp). This Phocaeicola vulgatus (strain ATCC 8482 / DSM 1447 / JCM 5826 / CCUG 4940 / NBRC 14291 / NCTC 11154) (Bacteroides vulgatus) protein is Aspartate--tRNA ligase.